A 136-amino-acid chain; its full sequence is MLSPKRTKFRKQHRGRMKGKSCRGNRICFGRYALQALEPTWITARQIEAGRRAITRYARRGGKIWVRIFPDKPVTLRPTETRMGSGKGSPEYWVAVVKPGRILYEMGGVSETVARAAISIAASKMPIRSQFIRLEI.

The disordered stretch occupies residues 1 to 20 (MLSPKRTKFRKQHRGRMKGK).

The protein belongs to the universal ribosomal protein uL16 family. Part of the 50S ribosomal subunit.

The protein resides in the plastid. It localises to the chloroplast. This Brachypodium distachyon (Purple false brome) protein is Large ribosomal subunit protein uL16c.